Here is a 371-residue protein sequence, read N- to C-terminus: DNA replication and repair protein RecF (371 aa).

ATP is bound at residue 30-37; that stretch reads GENAQGKT.

This sequence belongs to the RecF family.

The protein localises to the cytoplasm. Functionally, the RecF protein is involved in DNA metabolism; it is required for DNA replication and normal SOS inducibility. RecF binds preferentially to single-stranded, linear DNA. It also seems to bind ATP. The protein is DNA replication and repair protein RecF of Staphylococcus epidermidis (strain ATCC 12228 / FDA PCI 1200).